A 447-amino-acid polypeptide reads, in one-letter code: Tubulin beta chain (447 aa).

GTP is bound by residues glutamine 11, glutamate 69, serine 138, glycine 142, threonine 143, glycine 144, asparagine 204, and asparagine 226. Glutamate 69 is a Mg(2+) binding site. The segment at 419 to 447 (VSEYQQYQDATADEEGEYEDEDQEAEDDM) is disordered. The span at 429-447 (TADEEGEYEDEDQEAEDDM) shows a compositional bias: acidic residues.

Belongs to the tubulin family. As to quaternary structure, dimer of alpha and beta chains. A typical microtubule is a hollow water-filled tube with an outer diameter of 25 nm and an inner diameter of 15 nM. Alpha-beta heterodimers associate head-to-tail to form protofilaments running lengthwise along the microtubule wall with the beta-tubulin subunit facing the microtubule plus end conferring a structural polarity. Microtubules usually have 13 protofilaments but different protofilament numbers can be found in some organisms and specialized cells. It depends on Mg(2+) as a cofactor.

The protein localises to the cytoplasm. It localises to the cytoskeleton. Its function is as follows. Tubulin is the major constituent of microtubules, a cylinder consisting of laterally associated linear protofilaments composed of alpha- and beta-tubulin heterodimers. Microtubules grow by the addition of GTP-tubulin dimers to the microtubule end, where a stabilizing cap forms. Below the cap, tubulin dimers are in GDP-bound state, owing to GTPase activity of alpha-tubulin. This chain is Tubulin beta chain (TUBB), found in Hordeum vulgare (Barley).